We begin with the raw amino-acid sequence, 143 residues long: AP-4 complex subunit sigma (143 aa).

Belongs to the adaptor complexes small subunit family. In terms of assembly, adaptor protein complex 4 (AP-4) is a heterotetramer composed of two large adaptins (epsilon-type subunit and beta-type subunit), a medium adaptin (mu-type subunit) and a small adaptin (sigma-type subunit). Interacts with EHD2.

The protein localises to the golgi apparatus. It is found in the trans-Golgi network. It localises to the membrane. Its subcellular location is the coated pit. Its function is as follows. Subunit of novel type of clathrin- or non-clathrin-associated protein coat involved in targeting proteins from the trans-Golgi network (TGN) to the endosomal-lysosomal system. The polypeptide is AP-4 complex subunit sigma (Arabidopsis thaliana (Mouse-ear cress)).